Consider the following 44-residue polypeptide: Unknown protein 1 (44 aa).

This is Unknown protein 1 from Lonomia obliqua (Moth).